The chain runs to 599 residues: Growth factor receptor-bound protein 10 (599 aa).

Polar residues predominate over residues 1–23; that stretch reads MNNDINSSVESLNSACNMQSDTD. The segment at 1 to 122 is disordered; sequence MNNDINSSVE…QPPAKHFPPG (122 aa). The segment covering 32 to 43 has biased composition (low complexity); it reads QSASNQPSASSS. Polar residues predominate over residues 44 to 61; sequence RGQPQASPRQKMQRSQPV. Ser-50 carries the phosphoserine modification. Residues 97 to 118 are compositionally biased toward pro residues; the sequence is GSPPSVAPSSLPPPPSQPPAKH. Residue Ser-98 is modified to Phosphoserine; by MTOR, MAPK1 and MAPK3. Positions 171–255 constitute a Ras-associating domain; that stretch reads LRKDVKVFSE…SKFLFRKNYA (85 aa). The PH domain occupies 295–404; sequence CPEIQGFLQV…WMTAFRLLKY (110 aa). Phosphoserine; by MTOR and PKB/AKT1 is present on Ser-433. Position 436 is a phosphoserine (Ser-436). Ser-481 is subject to Phosphoserine; by MTOR, MAPK1 and MAPK3. The SH2 domain maps to 498-594; sequence WFHGRISREE…VLPCKLKHHC (97 aa).

Belongs to the GRB7/10/14 family. Interacts with ligand-activated tyrosine kinase receptors, including FGFR1, INSR, IGF1R, MET and PDGFRB in a phosphotyrosine-dependent manner through the SH2 domain. Poorly binds to the EGFR. Directly interacts with MAP3K14/NIK and is recruited to the EGFR-ERBB2 complex. Interacts with GIGYF1/PERQ1 and GIGYF2/TNRC15. When unphosphorylated, interacts with AKT1 and when phosphorylated with YWHAE/14-3-3 epsilon. Interacts with NEDD4. Interacts with LRP6, thus interfering with the binding of AXIN1 to LRP6. Binds relatively non-specifically to several phosphoinositides, including PI(5)P, PI(4,5)P2, PI(3,4)P2 and PI(3,4,5)P3, with modest affinities through the PH domain. Binds to activated NRAS. Post-translationally, phosphorylated on serine residues upon EGF, FGF and PDGF stimulation.

It localises to the cytoplasm. Phosphorylation by mTORC1 stabilizes and activates GRB10 constituting a feedback pathway by which mTORC1 inhibits INSR-dependent signaling. Its function is as follows. Adapter protein which modulates coupling of a number of cell surface receptor kinases with specific signaling pathways. Binds to, and suppress signals from, activated receptors tyrosine kinases, including the insulin (INSR) and insulin-like growth factor (IGF1R) receptors. The inhibitory effect can be achieved by 2 mechanisms: interference with the signaling pathway and increased receptor degradation. Delays and reduces AKT1 phosphorylation in response to insulin stimulation. Blocks association between INSR and IRS1 and IRS2 and prevents insulin-stimulated IRS1 and IRS2 tyrosine phosphorylation. Recruits NEDD4 to IGF1R, leading to IGF1R ubiquitination, increased internalization and degradation by both the proteasomal and lysosomal pathways. A similar role in the mediation of ubiquitination also has been suggested with INSR. Negatively regulates Wnt signaling by interacting with LRP6 intracellular portion and interfering with the binding of AXIN1 to LRP6. Positive regulator of the KDR/VEGFR-2 signaling pathway. May inhibit NEDD4-mediated degradation of KDR/VEGFR-2. This Rattus norvegicus (Rat) protein is Growth factor receptor-bound protein 10 (Grb10).